The primary structure comprises 238 residues: Sugar fermentation stimulation protein homolog (238 aa).

The protein belongs to the SfsA family.

The sequence is that of Sugar fermentation stimulation protein homolog from Bartonella tribocorum (strain CIP 105476 / IBS 506).